Reading from the N-terminus, the 205-residue chain is Large ribosomal subunit protein uL4 (205 aa).

It belongs to the universal ribosomal protein uL4 family. As to quaternary structure, part of the 50S ribosomal subunit.

Its function is as follows. One of the primary rRNA binding proteins, this protein initially binds near the 5'-end of the 23S rRNA. It is important during the early stages of 50S assembly. It makes multiple contacts with different domains of the 23S rRNA in the assembled 50S subunit and ribosome. Functionally, forms part of the polypeptide exit tunnel. The protein is Large ribosomal subunit protein uL4 of Thermus thermophilus (strain ATCC BAA-163 / DSM 7039 / HB27).